The following is a 455-amino-acid chain: Probable alpha-galactosidase B (455 aa).

A signal peptide spans 1–16; it reads MIEFLALITLISRANA. 2 disulfide bridges follow: C39–C71 and C121–C151. N42 carries N-linked (GlcNAc...) asparagine glycosylation. Catalysis depends on D149, which acts as the Nucleophile. N177 and N192 each carry an N-linked (GlcNAc...) asparagine glycan. 222–226 serves as a coordination point for substrate; it reads NWGNA. D244 (proton donor) is an active-site residue. Residue N395 is glycosylated (N-linked (GlcNAc...) asparagine).

This sequence belongs to the glycosyl hydrolase 27 family.

It is found in the secreted. It catalyses the reaction Hydrolysis of terminal, non-reducing alpha-D-galactose residues in alpha-D-galactosides, including galactose oligosaccharides, galactomannans and galactolipids.. In terms of biological role, hydrolyzes a variety of simple alpha-D-galactoside as well as more complex molecules such as oligosaccharides and polysaccharides. This is Probable alpha-galactosidase B (aglB) from Emericella nidulans (strain FGSC A4 / ATCC 38163 / CBS 112.46 / NRRL 194 / M139) (Aspergillus nidulans).